The primary structure comprises 132 residues: Fluoride-specific ion channel FluC (132 aa).

4 consecutive transmembrane segments (helical) span residues 5-25 (LVAI…LGMW), 36-56 (GTLA…ALFA), 68-88 (FVVT…AEMF), and 103-123 (IAVH…TFGA). 2 residues coordinate Na(+): G75 and T78.

This sequence belongs to the fluoride channel Fluc/FEX (TC 1.A.43) family.

The protein localises to the cell inner membrane. The enzyme catalyses fluoride(in) = fluoride(out). With respect to regulation, na(+) is not transported, but it plays an essential structural role and its presence is essential for fluoride channel function. In terms of biological role, fluoride-specific ion channel. Important for reducing fluoride concentration in the cell, thus reducing its toxicity. This chain is Fluoride-specific ion channel FluC, found in Chromohalobacter salexigens (strain ATCC BAA-138 / DSM 3043 / CIP 106854 / NCIMB 13768 / 1H11).